Consider the following 204-residue polypeptide: Large ribosomal subunit protein eL15 (204 aa).

It belongs to the eukaryotic ribosomal protein eL15 family. Component of the large ribosomal subunit.

It localises to the cytoplasm. Its function is as follows. Component of the large ribosomal subunit. The ribosome is a large ribonucleoprotein complex responsible for the synthesis of proteins in the cell. The protein is Large ribosomal subunit protein eL15 (rpl15) of Carassius auratus (Goldfish).